The sequence spans 186 residues: TATA-box-binding protein 2 (186 aa).

2 tandem repeats follow at residues 10-86 and 101-179. Glycyl lysine isopeptide (Lys-Gly) (interchain with G-Cter in SAMP2) cross-links involve residues Lys53 and Lys63.

It belongs to the TBP family.

Its function is as follows. General factor that plays a role in the activation of archaeal genes transcribed by RNA polymerase. Binds specifically to the TATA box promoter element which lies close to the position of transcription initiation. The polypeptide is TATA-box-binding protein 2 (tbp2) (Haloferax volcanii (strain ATCC 29605 / DSM 3757 / JCM 8879 / NBRC 14742 / NCIMB 2012 / VKM B-1768 / DS2) (Halobacterium volcanii)).